We begin with the raw amino-acid sequence, 1492 residues long: Cystic fibrosis transmembrane conductance regulator (1492 aa).

Topologically, residues 1–78 (MQRSPIEKAN…KLVNALRRCF (78 aa)) are cytoplasmic. The chain crosses the membrane as a helical span at residues 79-99 (FWRFLFYGILLYFVEFTKAVQ). Residues 82 to 366 (FLFYGILLYF…SAIQTWYDSL (285 aa)) form the ABC transmembrane type-1 1 domain. Residues 100–123 (PLCLGRIIASYNAKNTYEREIAYY) are Extracellular-facing. A helical membrane pass occupies residues 124-147 (LALGLCLLFVVRTLFLHPAVFGLQ). The Cytoplasmic segment spans residues 148–196 (HLGMQMRIALFSLIYKKILKMSSRVLDKIDTGQLVSLLSNNLNKFDEGV). Residues 197-217 (AVAHFVWIAPVQVVLLMGLIW) traverse the membrane as a helical segment. At 218–223 (NELTEF) the chain is on the extracellular side. Residues 224–244 (VFCGLGFLIMLALFQAWLGKK) traverse the membrane as a helical segment. The Cytoplasmic portion of the chain corresponds to 245 to 299 (MMQYRDKRAGKINERLAITSEIIDNIQSVKVYCWEDAMEKIIDDIRQVELKLTRK). Residues 300 to 320 (VAYCRYFSSSAFFFSGFFVVF) form a helical membrane-spanning segment. Over 321 to 340 (LSVVPYAFIHTIKLRRIFTT) the chain is Extracellular. A helical transmembrane segment spans residues 341–359 (ISYNIVLRMTVTRQFPSAI). The Cytoplasmic portion of the chain corresponds to 360 to 867 (QTWYDSLGAI…YLRYVTTNRN (508 aa)). Residues W402, S435, 459–466 (GSTGSGKS), and Q494 each bind ATP. One can recognise an ABC transporter 1 domain in the interval 424–647 (NGDDGLFFSN…KPDFSSQLLG (224 aa)). Residues 655–840 (SAERRNSILT…EEINEEDLKE (186 aa)) form a disordered R region region. Residues 868 to 888 (LVFVLILCLVIFLAEVAASLA) form a helical membrane-spanning segment. Residues 868 to 1169 (LVFVLILCLV…AVNSSIDVDG (302 aa)) form the ABC transmembrane type-1 2 domain. The Extracellular portion of the chain corresponds to 889 to 932 (GLWIISGLAINTGSQTNDTSTDLSHLSVFSKFITNGSHYYIFYI). 2 N-linked (GlcNAc...) asparagine glycosylation sites follow: N905 and N923. Residues 933–953 (YVGLADSFLALGVIRGLPLVH) form a discontinuously helical membrane-spanning segment. At 954–1004 (TLVTVSKDLHKQMLHSVLQGPMTAFNKMKAGRILNRFIKDTAIIDDMLPLT) the chain is on the cytoplasmic side. A helical membrane pass occupies residues 1005-1025 (VFDFVQLILIVVGAICVVSVL). Residues 1026 to 1027 (QP) lie on the Extracellular side of the membrane. Residues 1028 to 1048 (YTLLAAIPVAVIFIMLRAYFL) traverse the membrane as a helical segment. The Cytoplasmic portion of the chain corresponds to 1049 to 1109 (RTSQQLKQLE…TANWFLYLST (61 aa)). Residues 1110–1130 (LRWFQMRIDIVFVLFFIAVTF) traverse the membrane as a helical segment. Over 1131–1144 (IAIATHDVGEGQVG) the chain is Extracellular. The chain crosses the membrane as a helical span at residues 1145 to 1165 (IILTLAMNITSTLQWAVNSSI). Residues 1166–1492 (DVDGLMRSVS…AEEDLQETRL (327 aa)) lie on the Cytoplasmic side of the membrane. The ABC transporter 2 domain occupies 1220 to 1453 (MMVNNLTAKY…ASLFKQVFGH (234 aa)). ATP-binding positions include Y1229 and 1254 to 1261 (GRTGAGKS). Positions 1465–1474 (RNSSKRKTRP) are enriched in basic residues. The tract at residues 1465-1492 (RNSSKRKTRPKISALQEEAEEDLQETRL) is disordered. A compositionally biased stretch (acidic residues) spans 1481–1492 (EEAEEDLQETRL). The PDZ-binding signature appears at 1483–1485 (AEE).

Belongs to the ABC transporter superfamily. ABCC family. CFTR transporter (TC 3.A.1.202) subfamily. As to quaternary structure, monomer; does not require oligomerization for channel activity. May form oligomers in the membrane. Phosphorylated; cAMP treatment promotes phosphorylation and activates the channel. Dephosphorylation decreases the ATPase activity (in vitro). Phosphorylation at PKA sites activates the channel. Phosphorylation at PKC sites enhances the response to phosphorylation by PKA. As to expression, expressed in the rectal gland (at protein level).

The protein resides in the apical cell membrane. It localises to the early endosome membrane. The protein localises to the cell membrane. Its subcellular location is the recycling endosome membrane. It is found in the endoplasmic reticulum membrane. It catalyses the reaction ATP + H2O + closed Cl(-) channel = ADP + phosphate + open Cl(-) channel.. The enzyme catalyses chloride(in) = chloride(out). The catalysed reaction is hydrogencarbonate(in) = hydrogencarbonate(out). It carries out the reaction ATP + H2O = ADP + phosphate + H(+). Epithelial ion channel that plays an important role in the regulation of epithelial ion and water transport and fluid homeostasis. Mediates the transport of chloride ions across the cell membrane. Possesses an intrinsic ATPase activity and utilizes ATP to gate its channel; the passive flow of anions through the channel is gated by cycles of ATP binding and hydrolysis by the ATP-binding domains. The ion channel is also permeable to HCO(3)(-); selectivity depends on the extracellular chloride concentration. Exerts its function also by modulating the activity of other ion channels and transporters. Contributes to the regulation of the pH and the ion content of the epithelial fluid layer. In Squalus acanthias (Spiny dogfish), this protein is Cystic fibrosis transmembrane conductance regulator.